The sequence spans 237 residues: 1-(5-phosphoribosyl)-5-[(5-phosphoribosylamino)methylideneamino] imidazole-4-carboxamide isomerase (237 aa).

Asp-8 functions as the Proton acceptor in the catalytic mechanism. Asp-129 functions as the Proton donor in the catalytic mechanism.

It belongs to the HisA/HisF family.

The protein localises to the cytoplasm. The enzyme catalyses 1-(5-phospho-beta-D-ribosyl)-5-[(5-phospho-beta-D-ribosylamino)methylideneamino]imidazole-4-carboxamide = 5-[(5-phospho-1-deoxy-D-ribulos-1-ylimino)methylamino]-1-(5-phospho-beta-D-ribosyl)imidazole-4-carboxamide. Its pathway is amino-acid biosynthesis; L-histidine biosynthesis; L-histidine from 5-phospho-alpha-D-ribose 1-diphosphate: step 4/9. The protein is 1-(5-phosphoribosyl)-5-[(5-phosphoribosylamino)methylideneamino] imidazole-4-carboxamide isomerase of Clostridium botulinum (strain Alaska E43 / Type E3).